Here is a 103-residue protein sequence, read N- to C-terminus: Large ribosomal subunit protein bL21 (103 aa).

The protein belongs to the bacterial ribosomal protein bL21 family. Part of the 50S ribosomal subunit. Contacts protein L20.

In terms of biological role, this protein binds to 23S rRNA in the presence of protein L20. The chain is Large ribosomal subunit protein bL21 from Hahella chejuensis (strain KCTC 2396).